A 581-amino-acid polypeptide reads, in one-letter code: Pyridine nucleotide-disulfide oxidoreductase domain-containing protein 2 (581 aa).

38–71 (VVIGAGHNGLVAAAYLQRLGVNTAVFERRHVIGG) is a binding site for FAD.

The protein belongs to the carotenoid/retinoid oxidoreductase family. In terms of assembly, interacts with COX5B; this interaction may contribute to localize PYROXD2 to the inner face of the inner mitochondrial membrane.

It is found in the mitochondrion matrix. Probable oxidoreductase that may play a role as regulator of mitochondrial function. The sequence is that of Pyridine nucleotide-disulfide oxidoreductase domain-containing protein 2 from Mus musculus (Mouse).